The sequence spans 206 residues: 2,3-bisphosphoglycerate-dependent phosphoglycerate mutase (206 aa).

Substrate contacts are provided by residues 9–16 (RHGQSEWN), 22–23 (TG), Arg61, 88–91 (ERDY), Lys99, 115–116 (RR), and 159–160 (GN). Catalysis depends on His10, which acts as the Tele-phosphohistidine intermediate. Glu88 acts as the Proton donor/acceptor in catalysis.

Belongs to the phosphoglycerate mutase family. BPG-dependent PGAM subfamily. As to quaternary structure, homodimer.

The enzyme catalyses (2R)-2-phosphoglycerate = (2R)-3-phosphoglycerate. Its pathway is carbohydrate degradation; glycolysis; pyruvate from D-glyceraldehyde 3-phosphate: step 3/5. In terms of biological role, catalyzes the interconversion of 2-phosphoglycerate and 3-phosphoglycerate. The polypeptide is 2,3-bisphosphoglycerate-dependent phosphoglycerate mutase (Brucella anthropi (strain ATCC 49188 / DSM 6882 / CCUG 24695 / JCM 21032 / LMG 3331 / NBRC 15819 / NCTC 12168 / Alc 37) (Ochrobactrum anthropi)).